Here is a 512-residue protein sequence, read N- to C-terminus: ATP synthase subunit alpha (512 aa).

169–176 serves as a coordination point for ATP; that stretch reads GDRQTGKT.

Belongs to the ATPase alpha/beta chains family. As to quaternary structure, F-type ATPases have 2 components, CF(1) - the catalytic core - and CF(0) - the membrane proton channel. CF(1) has five subunits: alpha(3), beta(3), gamma(1), delta(1), epsilon(1). CF(0) has three main subunits: a(1), b(2) and c(9-12). The alpha and beta chains form an alternating ring which encloses part of the gamma chain. CF(1) is attached to CF(0) by a central stalk formed by the gamma and epsilon chains, while a peripheral stalk is formed by the delta and b chains.

The protein resides in the cell inner membrane. It catalyses the reaction ATP + H2O + 4 H(+)(in) = ADP + phosphate + 5 H(+)(out). Produces ATP from ADP in the presence of a proton gradient across the membrane. The alpha chain is a regulatory subunit. The protein is ATP synthase subunit alpha of Rickettsia bellii (strain OSU 85-389).